The chain runs to 473 residues: H(+)/Cl(-) exchange transporter ClcA (473 aa).

Residues methionine 1–proline 32 are Cytoplasmic-facing. Residues leucine 33–valine 69 traverse the membrane as a helical segment. Residues glutamine 70–phenylalanine 76 lie on the Periplasmic side of the membrane. The helical transmembrane segment at leucine 77 to phenylalanine 100 threads the bilayer. A Selectivity filter part_1 motif is present at residues glycine 106–proline 110. Serine 107 serves as a coordination point for chloride. The segment at residues isoleucine 109 to leucine 116 is an intramembrane region (helical). The Cytoplasmic segment spans residues glutamate 117–arginine 123. The next 2 membrane-spanning stretches (helical) occupy residues tryptophan 124–alanine 141 and glutamate 148–phenylalanine 166. The short motif at glycine 146–proline 150 is the Selectivity filter part_2 element. At arginine 167–threonine 176 the chain is on the cytoplasmic side. 2 consecutive intramembrane regions (helical) follow at residues leucine 177–alanine 189 and proline 193–isoleucine 201. Topologically, residues glutamate 202–serine 214 are cytoplasmic. The helical transmembrane segment at isoleucine 215 to phenylalanine 232 threads the bilayer. Topologically, residues asparagine 233–leucine 252 are periplasmic. Residues tryptophan 253 to glutamine 281 traverse the membrane as a helical segment. The Cytoplasmic portion of the chain corresponds to arginine 282–glutamate 287. A helical membrane pass occupies residues isoleucine 288–glutamate 309. Residues proline 310–serine 329 are Periplasmic-facing. 2 consecutive transmembrane segments (helical) span residues valine 330–serine 349 and glycine 355–alanine 376. Residues glycine 355–proline 359 carry the Selectivity filter part_3 motif. Chloride-binding residues include isoleucine 356 and phenylalanine 357. The Periplasmic segment spans residues valine 377–alanine 386. Residues glycine 387–serine 401 constitute an intramembrane region (helical). An intramembrane region (note=Loop between two helices) is located at residues valine 402–alanine 404. An intramembrane region (helical) is located at residues proline 405–threonine 416. The segment at residues aspartate 417–leucine 421 is an intramembrane region (note=Loop between two helices). Residues isoleucine 422–phenylalanine 438 form a helical membrane-spanning segment. The Cytoplasmic portion of the chain corresponds to leucine 439 to threonine 473. A chloride-binding site is contributed by tyrosine 445.

It belongs to the chloride channel (TC 2.A.49) family. ClcA subfamily. As to quaternary structure, homodimer.

Its subcellular location is the cell inner membrane. The enzyme catalyses 2 chloride(in) + H(+)(out) = 2 chloride(out) + H(+)(in). Proton-coupled chloride transporter. Functions as antiport system and exchanges two chloride ions for 1 proton. Probably acts as an electrical shunt for an outwardly-directed proton pump that is linked to amino acid decarboxylation, as part of the extreme acid resistance (XAR) response. The protein is H(+)/Cl(-) exchange transporter ClcA of Salmonella arizonae (strain ATCC BAA-731 / CDC346-86 / RSK2980).